Consider the following 32-residue polypeptide: Islet amyloid polypeptide (32 aa).

It belongs to the calcitonin family. Can form homodimers. Interacts with IDE and INS. Interaction with INS inhibits homodimerization and fibril formation.

The protein resides in the secreted. Its function is as follows. Amylin/IAPP is a glucoregulatory peptide hormone that plays an important role in the regulation of energy homeostasis. Selectively inhibits insulin-stimulated glucose utilization and glycogen deposition in muscle, while not affecting adipocyte glucose metabolism. IAPP function is mediated by the CALCR-RAMPs (AMYRs) receptor complexes. Amylin can also bind CALCR receptor in the absence of RAMPs, although it is more selective for AMYRs. In Saguinus oedipus (Cotton-top tamarin), this protein is Islet amyloid polypeptide (IAPP).